We begin with the raw amino-acid sequence, 389 residues long: Chorismate synthase (389 aa).

Residues arginine 40 and arginine 46 each coordinate NADP(+). FMN contacts are provided by residues 131–133, 252–253, glycine 297, 312–316, and arginine 338; these read RSS, NA, and KPIPT.

The protein belongs to the chorismate synthase family. Homotetramer. FMNH2 serves as cofactor.

The catalysed reaction is 5-O-(1-carboxyvinyl)-3-phosphoshikimate = chorismate + phosphate. It functions in the pathway metabolic intermediate biosynthesis; chorismate biosynthesis; chorismate from D-erythrose 4-phosphate and phosphoenolpyruvate: step 7/7. Its function is as follows. Catalyzes the anti-1,4-elimination of the C-3 phosphate and the C-6 proR hydrogen from 5-enolpyruvylshikimate-3-phosphate (EPSP) to yield chorismate, which is the branch point compound that serves as the starting substrate for the three terminal pathways of aromatic amino acid biosynthesis. This reaction introduces a second double bond into the aromatic ring system. In Lactiplantibacillus plantarum (strain ATCC BAA-793 / NCIMB 8826 / WCFS1) (Lactobacillus plantarum), this protein is Chorismate synthase.